We begin with the raw amino-acid sequence, 298 residues long: (S)-ureidoglycine aminohydrolase (298 aa).

A signal peptide spans 1–20 (MRSLYLIVFIVISLVKASKS). In terms of domain architecture, Cupin type-2 spans 222-288 (TMDFQPGEFL…ALGKTRSRYL (67 aa)). Mn(2+) contacts are provided by Glu235, His237, His241, and Gln275. Glu235 lines the substrate pocket. Gln275, Tyr287, and Lys291 together coordinate substrate.

It belongs to the UGHY family. Homooctamer. It depends on Mn(2+) as a cofactor.

Its subcellular location is the endoplasmic reticulum. It catalyses the reaction (S)-2-ureidoglycine + H2O = (S)-ureidoglycolate + NH4(+). Its function is as follows. Involved in the catabolism of purine nucleotides. Can use (S)-2-ureidoglycine as substrate, but not allantoate. The sequential activity of AAH, UGLYAH and UAH allows a complete purine breakdown without the intermediate generation of urea. This chain is (S)-ureidoglycine aminohydrolase (UGLYAH), found in Arabidopsis thaliana (Mouse-ear cress).